Here is a 596-residue protein sequence, read N- to C-terminus: Aspartate--tRNA(Asp/Asn) ligase (596 aa).

E172 serves as a coordination point for L-aspartate. Residues 196-199 form an aspartate region; that stretch reads QLFK. L-aspartate is bound at residue R218. Residues 218-220 and Q227 each bind ATP; that span reads RDE. L-aspartate is bound at residue H455. E489 contributes to the ATP binding site. R496 provides a ligand contact to L-aspartate. An ATP-binding site is contributed by 541 to 544; the sequence is GLDR.

This sequence belongs to the class-II aminoacyl-tRNA synthetase family. Type 1 subfamily. Homodimer.

Its subcellular location is the cytoplasm. The catalysed reaction is tRNA(Asx) + L-aspartate + ATP = L-aspartyl-tRNA(Asx) + AMP + diphosphate. Functionally, aspartyl-tRNA synthetase with relaxed tRNA specificity since it is able to aspartylate not only its cognate tRNA(Asp) but also tRNA(Asn). Reaction proceeds in two steps: L-aspartate is first activated by ATP to form Asp-AMP and then transferred to the acceptor end of tRNA(Asp/Asn). The polypeptide is Aspartate--tRNA(Asp/Asn) ligase (Bordetella bronchiseptica (strain ATCC BAA-588 / NCTC 13252 / RB50) (Alcaligenes bronchisepticus)).